The following is a 287-amino-acid chain: MEGKEEDVNVGANKFPERQPIGTAAQTESKDYKEPPPAPFFEPGELKSWSFYRAGIAEFIATFLFLYVTVLTVMGVKRAPNMCASVGIQGIAWAFGGMIFALVYCTAGISGGHINPAVTFGLFLARKLSLTRALFYIVMQCLGAICGAGVVKGFQPGLYQTNGGGANVVAHGYTKGSGLGAEIVGTFVLVYTVFSATDAKRSARDSHVPILAPLPIGFAVFLVHLATIPITGTGINPARSLGAAIIYNKDHAWDDHWIFWVGPFIGAALAALYHQIVIRAIPFKSKT.

Residue methionine 1 is modified to N-acetylmethionine. Residues 1–34 are disordered; that stretch reads MEGKEEDVNVGANKFPERQPIGTAAQTESKDYKE. Over 1–55 the chain is Cytoplasmic; it reads MEGKEEDVNVGANKFPERQPIGTAAQTESKDYKEPPPAPFFEPGELKSWSFYRAG. A helical membrane pass occupies residues 56 to 76; sequence IAEFIATFLFLYVTVLTVMGV. At 77 to 92 the chain is on the extracellular side; it reads KRAPNMCASVGIQGIA. Residues 93–113 traverse the membrane as a helical segment; sequence WAFGGMIFALVYCTAGISGGH. At 114–133 the chain is on the cytoplasmic side; sequence INPAVTFGLFLARKLSLTRA. The short motif at 115-117 is the NPA 1 element; the sequence is NPA. A helical transmembrane segment spans residues 134–154; it reads LFYIVMQCLGAICGAGVVKGF. The Extracellular segment spans residues 155 to 175; the sequence is QPGLYQTNGGGANVVAHGYTK. A helical membrane pass occupies residues 176-196; that stretch reads GSGLGAEIVGTFVLVYTVFSA. Over 197 to 209 the chain is Cytoplasmic; sequence TDAKRSARDSHVP. A helical transmembrane segment spans residues 210-230; sequence ILAPLPIGFAVFLVHLATIPI. Over 231 to 257 the chain is Extracellular; that stretch reads TGTGINPARSLGAAIIYNKDHAWDDHW. Positions 236–238 match the NPA 2 motif; the sequence is NPA. Residues 258–278 traverse the membrane as a helical segment; that stretch reads IFWVGPFIGAALAALYHQIVI. The Cytoplasmic portion of the chain corresponds to 279–287; the sequence is RAIPFKSKT. Phosphoserine is present on serine 285.

Belongs to the MIP/aquaporin (TC 1.A.8) family. PIP (TC 1.A.8.11) subfamily. In terms of tissue distribution, predominantly expressed in green siliques. Also expressed above ground, in roots and flower buds.

It localises to the cell membrane. Functionally, aquaporins facilitate the transport of water and small neutral solutes across cell membranes. This Arabidopsis thaliana (Mouse-ear cress) protein is Probable aquaporin PIP1-5 (PIP1-5).